A 253-amino-acid polypeptide reads, in one-letter code: Protein C1orf43 homolog (253 aa).

Residues 11–31 (VNVVLVMAYGSLVFVLLFIFV) traverse the membrane as a helical segment. The segment at 194–213 (SGSSQRQHQSAAKDLTQSPE) is disordered.

The protein localises to the membrane. Its subcellular location is the golgi apparatus. It localises to the mitochondrion. Its function is as follows. General regulator of phagocytosis. Required to uptake Gram negative bacterium by macrophages. This Bos taurus (Bovine) protein is Protein C1orf43 homolog.